A 175-amino-acid chain; its full sequence is ATP-dependent protease subunit HslV (175 aa).

T2 is an active-site residue. Residues A156, C159, and T162 each contribute to the Na(+) site.

The protein belongs to the peptidase T1B family. HslV subfamily. In terms of assembly, a double ring-shaped homohexamer of HslV is capped on each side by a ring-shaped HslU homohexamer. The assembly of the HslU/HslV complex is dependent on binding of ATP.

The protein localises to the cytoplasm. It catalyses the reaction ATP-dependent cleavage of peptide bonds with broad specificity.. With respect to regulation, allosterically activated by HslU binding. Its function is as follows. Protease subunit of a proteasome-like degradation complex believed to be a general protein degrading machinery. In Rhizobium etli (strain ATCC 51251 / DSM 11541 / JCM 21823 / NBRC 15573 / CFN 42), this protein is ATP-dependent protease subunit HslV.